Here is a 263-residue protein sequence, read N- to C-terminus: Ribosome maturation factor RimP (263 aa).

The interval 192–263 is disordered; it reads EREMKRDLGI…RGEIDPIEGE (72 aa). Over residues 217 to 231 the composition is skewed to basic residues; it reads PARRNAPKPKLKSTA. Residues 232–257 are compositionally biased toward basic and acidic residues; the sequence is KAHEKKPPKNTKEHRLAAERLRRGEI.

The protein belongs to the RimP family.

The protein localises to the cytoplasm. Its function is as follows. Required for maturation of 30S ribosomal subunits. The protein is Ribosome maturation factor RimP of Nitrobacter hamburgensis (strain DSM 10229 / NCIMB 13809 / X14).